A 256-amino-acid polypeptide reads, in one-letter code: 1-(5-phosphoribosyl)-5-[(5-phosphoribosylamino)methylideneamino] imidazole-4-carboxamide isomerase (256 aa).

Catalysis depends on Asp-8, which acts as the Proton acceptor. Asp-129 acts as the Proton donor in catalysis.

This sequence belongs to the HisA/HisF family.

The protein resides in the cytoplasm. It catalyses the reaction 1-(5-phospho-beta-D-ribosyl)-5-[(5-phospho-beta-D-ribosylamino)methylideneamino]imidazole-4-carboxamide = 5-[(5-phospho-1-deoxy-D-ribulos-1-ylimino)methylamino]-1-(5-phospho-beta-D-ribosyl)imidazole-4-carboxamide. It participates in amino-acid biosynthesis; L-histidine biosynthesis; L-histidine from 5-phospho-alpha-D-ribose 1-diphosphate: step 4/9. The chain is 1-(5-phosphoribosyl)-5-[(5-phosphoribosylamino)methylideneamino] imidazole-4-carboxamide isomerase from Synechococcus sp. (strain CC9311).